The following is a 208-amino-acid chain: Large ribosomal subunit protein uL4 (208 aa).

Residues valine 50–lysine 83 form a disordered region.

The protein belongs to the universal ribosomal protein uL4 family. In terms of assembly, part of the 50S ribosomal subunit.

Its function is as follows. One of the primary rRNA binding proteins, this protein initially binds near the 5'-end of the 23S rRNA. It is important during the early stages of 50S assembly. It makes multiple contacts with different domains of the 23S rRNA in the assembled 50S subunit and ribosome. Functionally, forms part of the polypeptide exit tunnel. This is Large ribosomal subunit protein uL4 from Mycoplasma capricolum subsp. capricolum (strain California kid / ATCC 27343 / NCTC 10154).